The primary structure comprises 378 residues: Peptide methionine sulfoxide reductase MsrA/MsrB (378 aa).

Residues glutamine 40–alanine 197 form a peptide methionine sulfoxide reductase A region. The active site involves cysteine 48. In terms of domain architecture, MsrB spans aspartate 240–lysine 362. Catalysis depends on cysteine 351, which acts as the Nucleophile.

In the N-terminal section; belongs to the MsrA Met sulfoxide reductase family. This sequence in the C-terminal section; belongs to the MsrB Met sulfoxide reductase family.

The enzyme catalyses L-methionyl-[protein] + [thioredoxin]-disulfide + H2O = L-methionyl-(S)-S-oxide-[protein] + [thioredoxin]-dithiol. The catalysed reaction is [thioredoxin]-disulfide + L-methionine + H2O = L-methionine (S)-S-oxide + [thioredoxin]-dithiol. It catalyses the reaction L-methionyl-[protein] + [thioredoxin]-disulfide + H2O = L-methionyl-(R)-S-oxide-[protein] + [thioredoxin]-dithiol. Has an important function as a repair enzyme for proteins that have been inactivated by oxidation. Catalyzes the reversible oxidation-reduction of methionine sulfoxide in proteins to methionine. This chain is Peptide methionine sulfoxide reductase MsrA/MsrB (msrAB), found in Vibrio cholerae serotype O1 (strain ATCC 39315 / El Tor Inaba N16961).